We begin with the raw amino-acid sequence, 361 residues long: Peptide chain release factor 1 (361 aa).

Q235 is subject to N5-methylglutamine. The segment at 288 to 307 (AARSADRKDQVGSGDRSERI) is disordered.

Belongs to the prokaryotic/mitochondrial release factor family. In terms of processing, methylated by PrmC. Methylation increases the termination efficiency of RF1.

The protein resides in the cytoplasm. In terms of biological role, peptide chain release factor 1 directs the termination of translation in response to the peptide chain termination codons UAG and UAA. The chain is Peptide chain release factor 1 from Nitrobacter hamburgensis (strain DSM 10229 / NCIMB 13809 / X14).